Consider the following 218-residue polypeptide: Phosphatidylserine decarboxylase proenzyme (218 aa).

Ser183 (schiff-base intermediate with substrate; via pyruvic acid) is an active-site residue. Pyruvic acid (Ser); by autocatalysis is present on Ser183.

This sequence belongs to the phosphatidylserine decarboxylase family. PSD-A subfamily. As to quaternary structure, heterodimer of a large membrane-associated beta subunit and a small pyruvoyl-containing alpha subunit. Pyruvate serves as cofactor. Is synthesized initially as an inactive proenzyme. Formation of the active enzyme involves a self-maturation process in which the active site pyruvoyl group is generated from an internal serine residue via an autocatalytic post-translational modification. Two non-identical subunits are generated from the proenzyme in this reaction, and the pyruvate is formed at the N-terminus of the alpha chain, which is derived from the carboxyl end of the proenzyme. The post-translation cleavage follows an unusual pathway, termed non-hydrolytic serinolysis, in which the side chain hydroxyl group of the serine supplies its oxygen atom to form the C-terminus of the beta chain, while the remainder of the serine residue undergoes an oxidative deamination to produce ammonia and the pyruvoyl prosthetic group on the alpha chain.

It localises to the cell membrane. It carries out the reaction a 1,2-diacyl-sn-glycero-3-phospho-L-serine + H(+) = a 1,2-diacyl-sn-glycero-3-phosphoethanolamine + CO2. Its pathway is phospholipid metabolism; phosphatidylethanolamine biosynthesis; phosphatidylethanolamine from CDP-diacylglycerol: step 2/2. Its function is as follows. Catalyzes the formation of phosphatidylethanolamine (PtdEtn) from phosphatidylserine (PtdSer). The protein is Phosphatidylserine decarboxylase proenzyme of Magnetococcus marinus (strain ATCC BAA-1437 / JCM 17883 / MC-1).